The following is a 214-amino-acid chain: Large ribosomal subunit protein uL3 (214 aa).

This sequence belongs to the universal ribosomal protein uL3 family. As to quaternary structure, part of the 50S ribosomal subunit. Forms a cluster with proteins L14 and L19.

One of the primary rRNA binding proteins, it binds directly near the 3'-end of the 23S rRNA, where it nucleates assembly of the 50S subunit. This Streptomyces coelicolor (strain ATCC BAA-471 / A3(2) / M145) protein is Large ribosomal subunit protein uL3.